A 209-amino-acid polypeptide reads, in one-letter code: MDWDSVAAEDVIEALREVEWSASPRSLAEFFSRFAFPRSFSKWMSRLKCNLYYYRTNYFILFVFVLGLALITRPLAILGAALTALSLAFLNDSFAATFNEKMIRTIRHFSPHLAAKMRPPHMPVIRGRSATRKTVYICGQPRLVFVLLGLTASFVLWFTSCGLLWVLYALTTALLMILLHASLRTPNLKARLNTFREEFRAVWRNYSEL.

4 helical membrane-spanning segments follow: residues 51 to 72, 76 to 98, 143 to 163, and 164 to 184; these read LYYY…ALIT, AILG…AATF, LVFV…SCGL, and LWVL…ASLR.

This sequence belongs to the PRA1 family.

It is found in the endosome membrane. Its function is as follows. May be involved in both secretory and endocytic intracellular trafficking in the endosomal/prevacuolar compartments. The polypeptide is PRA1 family protein A3 (PRA1A3) (Arabidopsis thaliana (Mouse-ear cress)).